Reading from the N-terminus, the 598-residue chain is Transcription factor dpl-1 (598 aa).

Disordered stretches follow at residues 1–73 (MNPT…PTGL), 435–457 (NRPY…VNSG), and 573–598 (TEQP…DYFQ). Residues 13-22 (PAQSRPQVSL) are compositionally biased toward polar residues. Gly residues predominate over residues 55-64 (GVGGSSGAGG).

Belongs to the E2F/DP family. As to quaternary structure, component of the DRM complex, at least composed of lin-9, lin-35, lin-37, lin-52, lin-53, lin-54- dpl-1 and efl-1. Interacts (via N-terminus) with efl-1. Interacts (via C-terminus) with lin-35 (via C-terminus).

The protein resides in the nucleus. Functionally, synthetic multivulva class B (synMuvB) protein. SynMuvB proteins are required to repress the induction of vulval development by Ras signaling and probably act by forming the multiprotein DRM complex that represses transcription. May also negatively regulate vulval development in association with other SynMuv class B proteins such as lin-15A. Can stimulate E2F-dependent transcription. Plays a role in negatively regulating the progression through the G1 phase of the cell cycle during postembryonic development, most likely by acting as a transcriptional repressor in association with the cell cycle regulatory factor efl-1 and the transcriptional repressor lin-35, but may also act as a positive regulator of cell cycle entry. Involved in the regulation of intestinal cell division during postembryonic development, most likely in complex with efl-1 and lin-35. Promotes germ cell programmed cell death, probably together with efl-1, by positively regulating the expression of the apoptosis proteins ced-3 and ced-4. In particular, positively regulates the expression of ced-4 in response to starvation. Its role in programmed cell death may be in conjunction with cell cycle regulatory factor efl-1 and the synthetic multivulva class B proteins lin-35, lin-37 and lin-52, and is independent of the ced-1, ced-8 and ced-9 pathways. The polypeptide is Transcription factor dpl-1 (Caenorhabditis elegans).